A 437-amino-acid chain; its full sequence is uncharacterized protein (437 aa).

The chain crosses the membrane as a helical span at residues 47-67 (LLIILIGFILLSSISAIQIDA).

It localises to the membrane. This is an uncharacterized protein from Methanocaldococcus jannaschii (strain ATCC 43067 / DSM 2661 / JAL-1 / JCM 10045 / NBRC 100440) (Methanococcus jannaschii).